Here is a 59-residue protein sequence, read N- to C-terminus: uncharacterized protein (59 aa).

This is an uncharacterized protein from Torque teno tupaia virus (isolate Tbc-TTV14).